The sequence spans 892 residues: Nitrogen assimilation transcription factor nirA (892 aa).

The tract at residues 1 to 32 (MGEKLDPELSSDGPHTKSSSKGQGTSTDNAPA) is disordered. The segment covering 16 to 27 (TKSSSKGQGTST) has biased composition (low complexity). A DNA-binding region (zn(2)-C6 fungal-type) is located at residues 42 to 70 (CIACRRRKSKCDGNLPSCAACSSVYHTTC). 3 disordered regions span residues 646–714 (GPWD…SGPV), 731–761 (AHNEARQPEPTYLRPVSTSYGPVPSTQSAQE), and 842–892 (PNIP…SFQR). Residues 649 to 674 (DQAASPSTTSDSPPSVSSQSVVATTD) are compositionally biased toward low complexity. Composition is skewed to polar residues over residues 675-714 (LSQPVSQSAGNQPANPSMGTSPNLTQPVASQYSSTPSGPV), 746-761 (VSTSYGPVPSTQSAQE), and 876-892 (NVNSNQTNMIFPGSFQR).

The protein resides in the nucleus. In terms of biological role, pathway-specific regulatory gene of nitrate assimilation; it activates the transcription of the genes for nitrate and nitrite reductases (niaD and niiA). The sequence is that of Nitrogen assimilation transcription factor nirA (nirA) from Emericella nidulans (strain FGSC A4 / ATCC 38163 / CBS 112.46 / NRRL 194 / M139) (Aspergillus nidulans).